The primary structure comprises 493 residues: Leucine-rich repeat-containing protein 14 (493 aa).

One copy of the LRR 1; degenerate repeat lies at 111-146; sequence KHALRVLDMTGLLDDGVEQDPETMSMWDCTAAVART. An LRR 2; degenerate repeat occupies 194–218; that stretch reads RLCCRDLRAEDLPMRNTVALLQLLD. The stretch at 219 to 246 is one LRR 3; degenerate repeat; that stretch reads AGCLRRIDLRFNNLGLRGLSVIIPHVAR. One copy of the LRR 4; degenerate repeat lies at 247–282; sequence FQHLASLRLHYVHGDSRQPSVDGEDNFRYFLAQMGR. LRR repeat units lie at residues 283-307, 308-339, 340-360, 364-391, and 392-416; these read FMCLRELSMGSSLLSGRLDQLLSTL, QRPLESLELAFCALLPEDLRFLAQSSHAAHLK, KLDLSGNDLSGNQLTPFQGLL, ATTLLHLELTECQLADAQLLATLPTLTR, and CASLRYLGLYGNPLSMAGLKELLRD.

This sequence belongs to the PRAME family. LRRC14 subfamily. In terms of assembly, interacts with IKBKB; disrupts IKBKB-IKBKG interaction preventing I-kappa-B-kinase (IKK) core complex formation and leading to a decrease of IKBKB phosphorylation and NF-kappaB activation. Interacts with CHUK.

Its subcellular location is the cytoplasm. Its function is as follows. Negatively regulates Toll-like receptor-mediated NF-kappa-B signaling by disrupting IKK core complex formation through interaction with IKBKB. The protein is Leucine-rich repeat-containing protein 14 of Mus musculus (Mouse).